Consider the following 644-residue polypeptide: Methionine--tRNA ligase (644 aa).

Residues 14–24 carry the 'HIGH' region motif; sequence YYPSAKLHIGN. Zn(2+) contacts are provided by C129, C132, C146, and C149. The short motif at 299 to 303 is the 'KMSKS' region element; sequence KMSKS. K302 contributes to the ATP binding site. Residues 542 to 644 enclose the tRNA-binding domain; sequence DVDKLDLRVV…EDIPTGSIVR (103 aa).

This sequence belongs to the class-I aminoacyl-tRNA synthetase family. MetG type 2A subfamily. As to quaternary structure, homodimer. Zn(2+) serves as cofactor.

It localises to the cytoplasm. It carries out the reaction tRNA(Met) + L-methionine + ATP = L-methionyl-tRNA(Met) + AMP + diphosphate. In terms of biological role, is required not only for elongation of protein synthesis but also for the initiation of all mRNA translation through initiator tRNA(fMet) aminoacylation. This Clostridium acetobutylicum (strain ATCC 824 / DSM 792 / JCM 1419 / IAM 19013 / LMG 5710 / NBRC 13948 / NRRL B-527 / VKM B-1787 / 2291 / W) protein is Methionine--tRNA ligase (metG).